The sequence spans 382 residues: Lipid-A-disaccharide synthase (382 aa).

The protein belongs to the LpxB family.

It catalyses the reaction 2-N,3-O-bis[(3R)-3-hydroxytetradecanoyl]-alpha-D-glucosaminyl 1-phosphate + UDP-2-N,3-O-bis[(3R)-3-hydroxytetradecanoyl]-alpha-D-glucosamine = lipid A disaccharide (E. coli) + UDP + H(+). The enzyme catalyses a lipid X + a UDP-2-N,3-O-bis[(3R)-3-hydroxyacyl]-alpha-D-glucosamine = a lipid A disaccharide + UDP + H(+). It participates in glycolipid biosynthesis; lipid IV(A) biosynthesis; lipid IV(A) from (3R)-3-hydroxytetradecanoyl-[acyl-carrier-protein] and UDP-N-acetyl-alpha-D-glucosamine: step 5/6. Condensation of UDP-2,3-diacylglucosamine and 2,3-diacylglucosamine-1-phosphate to form lipid A disaccharide, a precursor of lipid A, a phosphorylated glycolipid that anchors the lipopolysaccharide to the outer membrane of the cell. The protein is Lipid-A-disaccharide synthase of Escherichia coli O7:K1 (strain IAI39 / ExPEC).